A 233-amino-acid polypeptide reads, in one-letter code: Large ribosomal subunit protein uL1 (233 aa).

This sequence belongs to the universal ribosomal protein uL1 family. In terms of assembly, part of the 50S ribosomal subunit.

Functionally, binds directly to 23S rRNA. The L1 stalk is quite mobile in the ribosome, and is involved in E site tRNA release. Its function is as follows. Protein L1 is also a translational repressor protein, it controls the translation of the L11 operon by binding to its mRNA. The polypeptide is Large ribosomal subunit protein uL1 (Rhodospirillum rubrum (strain ATCC 11170 / ATH 1.1.1 / DSM 467 / LMG 4362 / NCIMB 8255 / S1)).